Consider the following 418-residue polypeptide: MGSDAKNLMSDGNVQIVKTGEVIGATQLTEGELIVEAGGRAENTVVTGAGWLKVATGGIAKCTQYGNNGTLSVSDGAIATDIVQSEGGAISLSTLATVNGRHPEGEFSVDKGYACGLLLENGGNLRVLEGHRAEKIILDQEGGLLVNGTTSAVVVDEGGELLVYPGGEASNCEINQGGVFMLAGKASDTLLAGGTMNNLGGEDSDTIVENGSIYRLGTDGLQLYSSGKTQNLSVNVGGRAEVHAGTLENAVIQGGTVILLSPTSADENFVVEEDRAPVELTGSVALLDGASMIIGYGAELQQSTITVQQGGVLILDGSTVKGDSVTFIVGNINLNGGKLWLITDAATHVQLKVKRLRGEGAICLQTSAKEISPDFINVKGEVTGDIHVEITDASRQTLCNALKLQPDEDGIGATLQPA.

In Escherichia coli (strain K12), this protein is Protein YdhQ (ydhQ).